The following is a 213-amino-acid chain: Octanoyltransferase (213 aa).

The 176-residue stretch at 32 to 207 (DSTLDEIWLV…NILALLNNPD (176 aa)) folds into the BPL/LPL catalytic domain. Residues 71–78 (RGGQVTYH), 138–140 (SLG), and 151–153 (GLA) each bind substrate. Cys-169 acts as the Acyl-thioester intermediate in catalysis.

Belongs to the LipB family.

The protein resides in the cytoplasm. It carries out the reaction octanoyl-[ACP] + L-lysyl-[protein] = N(6)-octanoyl-L-lysyl-[protein] + holo-[ACP] + H(+). The protein operates within protein modification; protein lipoylation via endogenous pathway; protein N(6)-(lipoyl)lysine from octanoyl-[acyl-carrier-protein]: step 1/2. Its function is as follows. Catalyzes the transfer of endogenously produced octanoic acid from octanoyl-acyl-carrier-protein onto the lipoyl domains of lipoate-dependent enzymes. Lipoyl-ACP can also act as a substrate although octanoyl-ACP is likely to be the physiological substrate. This Escherichia coli O8 (strain IAI1) protein is Octanoyltransferase.